A 184-amino-acid chain; its full sequence is NADH dehydrogenase [ubiquinone] 1 alpha subcomplex assembly factor 3 (184 aa).

This sequence belongs to the NDUFAF3 family. As to quaternary structure, interacts with NDUFAF4, NDUFS2 and NDUFS3.

Its subcellular location is the nucleus. The protein resides in the mitochondrion inner membrane. Functionally, essential factor for the assembly of mitochondrial NADH:ubiquinone oxidoreductase complex (complex I). In Homo sapiens (Human), this protein is NADH dehydrogenase [ubiquinone] 1 alpha subcomplex assembly factor 3 (NDUFAF3).